The primary structure comprises 240 residues: Cysteine-rich venom protein catrin (240 aa).

Positions 1–19 (MIAFIVLPILAAVLQQSSG) are cleaved as a signal peptide. The SCP domain maps to 38 to 166 (VDLHNFLRRS…KYSYFYVCQY (129 aa)). 8 disulfides stabilise this stretch: C75-C153, C92-C167, C148-C164, C186-C193, C189-C198, C202-C235, C211-C229, and C220-C233. A ShKT domain is found at 202 to 235 (CTKEDKYTNCKSLVQQAGCQDKQMQSDCPAICFC).

Belongs to the CRISP family. Expressed by the venom gland.

Its subcellular location is the secreted. In terms of biological role, catrin-2 weakly blocks contraction of smooth muscle elicited by high potassium-induced depolarization, but does not block caffeine-stimulated contraction. Catrin-1 has no significant effect. May target voltage-gated calcium channels on smooth muscle. The chain is Cysteine-rich venom protein catrin from Crotalus atrox (Western diamondback rattlesnake).